A 492-amino-acid chain; its full sequence is Octanoyltransferase (492 aa).

Residues 1–255 form a unknown region; the sequence is MRCILLGSGT…GYDGLEAIID (255 aa). The lipB domain stretch occupies residues 256 to 492; the sequence is EKGIRIKDFE…AVFRRNFGAL (237 aa). One can recognise a BPL/LPL catalytic domain in the interval 305–492; the sequence is RKPQNTLLFC…AVFRRNFGAL (188 aa). Residues 350–357, 423–425, and 436–438 contribute to the substrate site; these read RGGDITYH, AIG, and GFA. Cys-454 serves as the catalytic Acyl-thioester intermediate.

This sequence in the C-terminal section; belongs to the LipB family.

It is found in the cytoplasm. The enzyme catalyses octanoyl-[ACP] + L-lysyl-[protein] = N(6)-octanoyl-L-lysyl-[protein] + holo-[ACP] + H(+). It functions in the pathway protein modification; protein lipoylation via endogenous pathway; protein N(6)-(lipoyl)lysine from octanoyl-[acyl-carrier-protein]: step 1/2. Functionally, catalyzes the transfer of endogenously produced octanoic acid from octanoyl-acyl-carrier-protein onto the lipoyl domains of lipoate-dependent enzymes. Lipoyl-ACP can also act as a substrate although octanoyl-ACP is likely to be the physiological substrate. The polypeptide is Octanoyltransferase (Porphyromonas gingivalis (strain ATCC BAA-308 / W83)).